A 1395-amino-acid chain; its full sequence is uncharacterized protein (1395 aa).

Ala-89–Ser-96 is a binding site for ATP. Disordered stretches follow at residues Glu-146 to Pro-166 and Ser-205 to Arg-391. 2 stretches are compositionally biased toward low complexity: residues Gly-155–Pro-166 and Ser-205–Pro-222. The segment covering Glu-230–Ala-269 has biased composition (basic and acidic residues). The segment covering Ser-287–Gly-301 has biased composition (low complexity). Basic residues predominate over residues Val-313–Arg-328. Over residues Lys-337–Ile-346 the composition is skewed to basic and acidic residues. The span at Gly-349–Ser-358 shows a compositional bias: low complexity. A compositionally biased stretch (basic and acidic residues) spans Pro-369 to Arg-391. 2 positions are modified to phosphoserine: Ser-814 and Ser-1080. The interval Pro-1110 to Glu-1132 is disordered. Ser-1194 and Ser-1338 each carry phosphoserine. The segment covering Thr-1346–Arg-1359 has biased composition (basic and acidic residues). The segment at Thr-1346 to Leu-1395 is disordered.

This is an uncharacterized protein from Homo sapiens (Human).